Here is a 468-residue protein sequence, read N- to C-terminus: MSDISKVFDLIKEHDVKYVDLRFTDPRGKLHHTAQHVSTIDEDVFEDGIMFDGSSIAGWKAINESDMILQLDPTTAVMDPFSAQPTLNILCDVYEPSTGQPYARCPRGIAKAAEKYMASAGIADTAYFGPEAEFFVFDDVKFKVEMNKVSYEFDSEEGPYTSDKDYEDGNLGHRPGVKGGYFPVAPVDSGSDLRAEMLSVLAEMGVPVEKHHHEVAASQHELGIKFDTLVRTGDNMQYYKYVVHNVAHAYGKTATFMPKPVFGDNGSGMHMHQSIWKEGQPLFAGNQYADLSELALYYIGGIIKHAKALNAFTNPTTNSYKRLVPGYEAPVLLAYSARNRSASCRIPYVASPKGKRVEVRFPDPSANPYLAFAALLMAGLDGIQNKIHPGEAMDKNLYDLPAEELAKVPTVCGSREALDSLKADSAFLQKGDVFTKDMIESYIDLRTEELLAFETMPHPIEYKMYYSV.

The 85-residue stretch at 14–98 (HDVKYVDLRF…ILCDVYEPST (85 aa)) folds into the GS beta-grasp domain. The 363-residue stretch at 106–468 (PRGIAKAAEK…PIEYKMYYSV (363 aa)) folds into the GS catalytic domain. Mg(2+) contacts are provided by glutamate 131 and glutamate 133. An ATP-binding site is contributed by glutamate 209. Mg(2+) contacts are provided by glutamate 214 and glutamate 221. Residues 265-266 (NG) and glycine 266 each bind L-glutamate. Histidine 270 is a Mg(2+) binding site. Residues 272 to 274 (HQS) and serine 274 each bind ATP. L-glutamate is bound by residues arginine 322, glutamate 328, and arginine 340. Arginine 340, arginine 345, and lysine 353 together coordinate ATP. Residue glutamate 358 participates in Mg(2+) binding. Arginine 360 provides a ligand contact to L-glutamate. Tyrosine 398 carries the post-translational modification O-AMP-tyrosine.

Belongs to the glutamine synthetase family. In terms of assembly, oligomer of 12 subunits arranged in the form of two hexameric ring. Mg(2+) is required as a cofactor.

The protein localises to the cytoplasm. The catalysed reaction is L-glutamate + NH4(+) + ATP = L-glutamine + ADP + phosphate + H(+). Its activity is regulated as follows. The activity of this enzyme could be controlled by adenylation under conditions of abundant glutamine. Its function is as follows. Catalyzes the ATP-dependent biosynthesis of glutamine from glutamate and ammonia. The polypeptide is Glutamine synthetase (Azospirillum brasilense).